We begin with the raw amino-acid sequence, 611 residues long: UvrABC system protein C (611 aa).

In terms of domain architecture, GIY-YIG spans 12–96 (DQPGIYQYFD…IKQLKPKYNI (85 aa)). In terms of domain architecture, UVR spans 202 to 237 (EKILEILNQKMQKYAENLQFEEAAEIRDRIKSIESA).

It belongs to the UvrC family. As to quaternary structure, interacts with UvrB in an incision complex.

Its subcellular location is the cytoplasm. In terms of biological role, the UvrABC repair system catalyzes the recognition and processing of DNA lesions. UvrC both incises the 5' and 3' sides of the lesion. The N-terminal half is responsible for the 3' incision and the C-terminal half is responsible for the 5' incision. In Nautilia profundicola (strain ATCC BAA-1463 / DSM 18972 / AmH), this protein is UvrABC system protein C.